The primary structure comprises 61 residues: uncharacterized protein (61 aa).

The next 2 helical transmembrane spans lie at 5-25 and 29-49; these read MLYF…SLLL and YILT…PWYT.

Its subcellular location is the membrane. This is an uncharacterized protein from Saccharomyces cerevisiae (strain ATCC 204508 / S288c) (Baker's yeast).